Here is a 403-residue protein sequence, read N- to C-terminus: Farnesyl pyrophosphate synthase (403 aa).

Mg(2+)-binding residues include Asp-156 and Asp-160. Positions 156–160 (DDLAD) match the DDXXD motif motif.

This sequence belongs to the FPP/GGPP synthase family. The cofactor is Mg(2+).

The catalysed reaction is isopentenyl diphosphate + (2E)-geranyl diphosphate = (2Z,6E)-farnesyl diphosphate + diphosphate. It functions in the pathway pheromone biosynthesis. Farnesyl pyrophosphate synthase involved in pheromone biosynthesis by catalyzing the formation of (2Z,6E)-farnesyl diphosphate. The chain is Farnesyl pyrophosphate synthase from Nezara viridula (Southern green stink bug).